Reading from the N-terminus, the 47-residue chain is MGQEPKGIESRKIQDGHVRKKVGRQQGLWVRTTKKEKFSRMSRDANV.

Composition is skewed to basic and acidic residues over residues 1–17 (MGQE…QDGH) and 33–47 (TKKE…DANV). The segment at 1-47 (MGQEPKGIESRKIQDGHVRKKVGRQQGLWVRTTKKEKFSRMSRDANV) is disordered.

In terms of biological role, involved in the control of extracellular enzymes production. Stimulates PEL, PEH, CEL, and PRT production. The chain is Exoenzymes regulatory protein AepH (aepH) from Pectobacterium carotovorum subsp. carotovorum (Erwinia carotovora subsp. carotovora).